The primary structure comprises 493 residues: 3-octaprenyl-4-hydroxybenzoate carboxy-lyase (493 aa).

Asn172 lines the Mn(2+) pocket. Prenylated FMN contacts are provided by residues 175–177 (IYR), 189–191 (RWL), and 194–195 (RG). Glu238 is a Mn(2+) binding site. Asp287 functions as the Proton donor in the catalytic mechanism.

It belongs to the UbiD family. In terms of assembly, homohexamer. Requires prenylated FMN as cofactor. The cofactor is Mn(2+).

The protein localises to the cell membrane. It carries out the reaction a 4-hydroxy-3-(all-trans-polyprenyl)benzoate + H(+) = a 2-(all-trans-polyprenyl)phenol + CO2. It participates in cofactor biosynthesis; ubiquinone biosynthesis. Catalyzes the decarboxylation of 3-octaprenyl-4-hydroxy benzoate to 2-octaprenylphenol, an intermediate step in ubiquinone biosynthesis. The polypeptide is 3-octaprenyl-4-hydroxybenzoate carboxy-lyase (Shewanella amazonensis (strain ATCC BAA-1098 / SB2B)).